Consider the following 62-residue polypeptide: DNA-directed RNA polymerase subunit Rpo10 (62 aa).

Zn(2+)-binding residues include Cys6, Cys9, Cys43, and Cys44.

This sequence belongs to the archaeal Rpo10/eukaryotic RPB10 RNA polymerase subunit family. In terms of assembly, part of the RNA polymerase complex. Requires Zn(2+) as cofactor.

Its subcellular location is the cytoplasm. It carries out the reaction RNA(n) + a ribonucleoside 5'-triphosphate = RNA(n+1) + diphosphate. Functionally, DNA-dependent RNA polymerase (RNAP) catalyzes the transcription of DNA into RNA using the four ribonucleoside triphosphates as substrates. The polypeptide is DNA-directed RNA polymerase subunit Rpo10 (Methanosarcina mazei (strain ATCC BAA-159 / DSM 3647 / Goe1 / Go1 / JCM 11833 / OCM 88) (Methanosarcina frisia)).